The primary structure comprises 585 residues: Aspartate--tRNA ligase (585 aa).

Residue glutamate 173 coordinates L-aspartate. The segment at glutamine 197–lysine 200 is aspartate. Position 219 (arginine 219) interacts with L-aspartate. ATP-binding positions include arginine 219–glutamate 221 and glutamine 228. Histidine 446 is a binding site for L-aspartate. Glutamate 480 provides a ligand contact to ATP. L-aspartate is bound at residue arginine 487. Glycine 532 to arginine 535 is a binding site for ATP.

The protein belongs to the class-II aminoacyl-tRNA synthetase family. Type 1 subfamily. In terms of assembly, homodimer.

It is found in the cytoplasm. The enzyme catalyses tRNA(Asp) + L-aspartate + ATP = L-aspartyl-tRNA(Asp) + AMP + diphosphate. In terms of biological role, catalyzes the attachment of L-aspartate to tRNA(Asp) in a two-step reaction: L-aspartate is first activated by ATP to form Asp-AMP and then transferred to the acceptor end of tRNA(Asp). The chain is Aspartate--tRNA ligase from Parabacteroides distasonis (strain ATCC 8503 / DSM 20701 / CIP 104284 / JCM 5825 / NCTC 11152).